The chain runs to 429 residues: 3-phosphoshikimate 1-carboxyvinyltransferase (429 aa).

3-phosphoshikimate-binding residues include lysine 11, serine 12, and arginine 16. Residue lysine 11 coordinates phosphoenolpyruvate. Glycine 82 and arginine 110 together coordinate phosphoenolpyruvate. 3-phosphoshikimate contacts are provided by serine 155, glutamine 157, aspartate 302, and lysine 329. Glutamine 157 contributes to the phosphoenolpyruvate binding site. Aspartate 302 functions as the Proton acceptor in the catalytic mechanism. Phosphoenolpyruvate-binding residues include arginine 333 and arginine 385.

The protein belongs to the EPSP synthase family. Monomer.

It is found in the cytoplasm. The catalysed reaction is 3-phosphoshikimate + phosphoenolpyruvate = 5-O-(1-carboxyvinyl)-3-phosphoshikimate + phosphate. The protein operates within metabolic intermediate biosynthesis; chorismate biosynthesis; chorismate from D-erythrose 4-phosphate and phosphoenolpyruvate: step 6/7. Catalyzes the transfer of the enolpyruvyl moiety of phosphoenolpyruvate (PEP) to the 5-hydroxyl of shikimate-3-phosphate (S3P) to produce enolpyruvyl shikimate-3-phosphate and inorganic phosphate. This Helicobacter pylori (strain HPAG1) protein is 3-phosphoshikimate 1-carboxyvinyltransferase.